We begin with the raw amino-acid sequence, 211 residues long: MISYYFQGFALGAAMILPLGPQNAFVMNQGIRRQYHLMIALLCALSDLVLISAGIFGGSALLMQSPWLLALVTWGGVAFLLWYGFGALKTAMSSNLELASAEVMKQGRWKIIATMLAVTWLNPHVYLDTFVVLGSLGGQLAMEPKRWFALGTISASFLWFFGLALLAAWLAPRLRTAKAQRIINILVGVVMWLIAFQLAREGVAHMHALFN.

6 helical membrane-spanning segments follow: residues Met-1–Pro-21, Leu-37–Gly-57, Leu-68–Leu-88, Ile-111–Val-131, Trp-147–Ala-167, and Ala-179–Ala-199.

This sequence belongs to the LysE/ArgO transporter (TC 2.A.75) family.

It localises to the cell inner membrane. The enzyme catalyses L-arginine(in) = L-arginine(out). Involved in the export of arginine. Important to control the intracellular level of arginine and the correct balance between arginine and lysine. The chain is Arginine exporter protein ArgO from Salmonella typhimurium (strain LT2 / SGSC1412 / ATCC 700720).